Consider the following 202-residue polypeptide: Nucleoside triphosphate pyrophosphatase (202 aa).

Catalysis depends on D79, which acts as the Proton acceptor.

It belongs to the Maf family. A divalent metal cation serves as cofactor.

It localises to the cytoplasm. It carries out the reaction a ribonucleoside 5'-triphosphate + H2O = a ribonucleoside 5'-phosphate + diphosphate + H(+). The enzyme catalyses a 2'-deoxyribonucleoside 5'-triphosphate + H2O = a 2'-deoxyribonucleoside 5'-phosphate + diphosphate + H(+). Functionally, nucleoside triphosphate pyrophosphatase. May have a dual role in cell division arrest and in preventing the incorporation of modified nucleotides into cellular nucleic acids. The polypeptide is Nucleoside triphosphate pyrophosphatase (Nitrobacter hamburgensis (strain DSM 10229 / NCIMB 13809 / X14)).